The primary structure comprises 358 residues: Thiol protease aleurain-like (358 aa).

The signal sequence occupies residues 1 to 21 (MSVKLNLSSSILLILFAAAAS). A propeptide spans 22–140 (KEIGFDESNP…KGSHKITEAT (119 aa)) (activation peptide). N-linked (GlcNAc...) asparagine glycosylation occurs at Asn-125. Cystine bridges form between Cys-162–Cys-205 and Cys-196–Cys-238. Residue Cys-165 is part of the active site. An N-linked (GlcNAc...) asparagine glycan is attached at Asn-254. The cysteines at positions 296 and 346 are disulfide-linked. Active-site residues include His-305 and Asn-325.

This sequence belongs to the peptidase C1 family.

Its subcellular location is the vacuole. The enzyme catalyses Hydrolysis of proteins, acting as an aminopeptidase (notably, cleaving Arg-|-Xaa bonds) as well as an endopeptidase.. Functionally, may play a role in proteolysis leading to mobilization of nitrogen during senescence and starvation. The chain is Thiol protease aleurain-like from Arabidopsis thaliana (Mouse-ear cress).